Reading from the N-terminus, the 207-residue chain is Gene 66 protein (207 aa).

This Mycobacterium (Mycobacteriophage L5) protein is Gene 66 protein (66).